Here is a 155-residue protein sequence, read N- to C-terminus: Interleukin-2 (155 aa).

The first 20 residues, 1 to 20 (MYSRQLASCVALALVLLANS), serve as a signal peptide directing secretion. Thr23 carries an O-linked (GalNAc...) threonine glycan. A disulfide bridge connects residues Cys78 and Cys126.

This sequence belongs to the IL-2 family.

The protein resides in the secreted. Cytokine produced by activated CD4-positive helper T-cells and to a lesser extend activated CD8-positive T-cells and natural killer (NK) cells that plays pivotal roles in the immune response and tolerance. Binds to a receptor complex composed of either the high-affinity trimeric IL-2R (IL2RA/CD25, IL2RB/CD122 and IL2RG/CD132) or the low-affinity dimeric IL-2R (IL2RB and IL2RG). Interaction with the receptor leads to oligomerization and conformation changes in the IL-2R subunits resulting in downstream signaling starting with phosphorylation of JAK1 and JAK3. In turn, JAK1 and JAK3 phosphorylate the receptor to form a docking site leading to the phosphorylation of several substrates including STAT5. This process leads to activation of several pathways including STAT, phosphoinositide-3-kinase/PI3K and mitogen-activated protein kinase/MAPK pathways. Functions as a T-cell growth factor and can increase NK-cell cytolytic activity as well. Promotes strong proliferation of activated B-cells and subsequently immunoglobulin production. Plays a pivotal role in regulating the adaptive immune system by controlling the survival and proliferation of regulatory T-cells, which are required for the maintenance of immune tolerance. Moreover, participates in the differentiation and homeostasis of effector T-cell subsets, including Th1, Th2, Th17 as well as memory CD8-positive T-cells. The sequence is that of Interleukin-2 (IL2) from Meriones unguiculatus (Mongolian jird).